The chain runs to 68 residues: MLFKSYVYFLAGLLLVGLFTSCDADAQYEELVPGFFRKGGVSGVGDYKPIVVFGKSFNQFEAAEGAKG.

A signal peptide spans 1-24; it reads MLFKSYVYFLAGLLLVGLFTSCDA. A propeptide spanning residues 25 to 38 is cleaved from the precursor; that stretch reads DAQYEELVPGFFRK.

In terms of tissue distribution, expressed in salivary glands.

The protein resides in the secreted. Functionally, horsefly salivary gland immunosuppressant protein that likely inhibits the host inflammatory response by regulation of anti- and pro-inflammatory cytokines. When tested on mouse splenocytes in the presence of LPS, it increases the secretion of the proinflammatory cytokine interleukin-10 (IL10) and decreases the secretion of the proinflammatory cytokine interferon-gamma (IFNG) in a dose-dependent manner. The protein is Tabimmunregulin 12 of Tabanus yao (Horsefly).